Reading from the N-terminus, the 205-residue chain is Large ribosomal subunit protein bL25 (205 aa).

The tract at residues 184–205 is disordered; the sequence is QPAGAVSEAAEGGEAAGETPAA. A compositionally biased stretch (low complexity) spans 186-205; sequence AGAVSEAAEGGEAAGETPAA.

It belongs to the bacterial ribosomal protein bL25 family. CTC subfamily. Part of the 50S ribosomal subunit; part of the 5S rRNA/L5/L18/L25 subcomplex. Contacts the 5S rRNA. Binds to the 5S rRNA independently of L5 and L18.

This is one of the proteins that binds to the 5S RNA in the ribosome where it forms part of the central protuberance. The polypeptide is Large ribosomal subunit protein bL25 (Cupriavidus necator (strain ATCC 17699 / DSM 428 / KCTC 22496 / NCIMB 10442 / H16 / Stanier 337) (Ralstonia eutropha)).